Reading from the N-terminus, the 79-residue chain is Large ribosomal subunit protein bL28 (79 aa).

Positions 1–26 are disordered; it reads MAKVCQVTGKRPQSGNNVSHANKKTN. The segment covering 11-20 has biased composition (polar residues); sequence RPQSGNNVSH.

The protein belongs to the bacterial ribosomal protein bL28 family.

The chain is Large ribosomal subunit protein bL28 from Coxiella burnetii (strain CbuK_Q154) (Coxiella burnetii (strain Q154)).